Here is a 225-residue protein sequence, read N- to C-terminus: Enolase-phosphatase E1 (225 aa).

It belongs to the HAD-like hydrolase superfamily. MasA/MtnC family. In terms of assembly, monomer. The cofactor is Mg(2+).

The catalysed reaction is 5-methylsulfanyl-2,3-dioxopentyl phosphate + H2O = 1,2-dihydroxy-5-(methylsulfanyl)pent-1-en-3-one + phosphate. Its pathway is amino-acid biosynthesis; L-methionine biosynthesis via salvage pathway; L-methionine from S-methyl-5-thio-alpha-D-ribose 1-phosphate: step 3/6. It participates in amino-acid biosynthesis; L-methionine biosynthesis via salvage pathway; L-methionine from S-methyl-5-thio-alpha-D-ribose 1-phosphate: step 4/6. In terms of biological role, bifunctional enzyme that catalyzes the enolization of 2,3-diketo-5-methylthiopentyl-1-phosphate (DK-MTP-1-P) into the intermediate 2-hydroxy-3-keto-5-methylthiopentenyl-1-phosphate (HK-MTPenyl-1-P), which is then dephosphorylated to form the acireductone 1,2-dihydroxy-3-keto-5-methylthiopentene (DHK-MTPene). The polypeptide is Enolase-phosphatase E1 (Shewanella halifaxensis (strain HAW-EB4)).